A 341-amino-acid polypeptide reads, in one-letter code: GTP-binding protein GTR2 (341 aa).

GTP contacts are provided by serine 23, serine 24, serine 43, histidine 124, and aspartate 127.

The protein belongs to the GTR/RAG GTP-binding protein family. In terms of assembly, heterodimer; with GTR1. Component of the GSE complex composed of GTR1, GTR2, SLM4, MEH1 and LTV1. Component of the EGO complex, at least composed of GTR2, SLM4 and MEH1. Interacts with GTR1; the interaction is direct.

It is found in the vacuole membrane. It catalyses the reaction GTP + H2O = GDP + phosphate + H(+). Its function is as follows. GTPase involved in activation of the TORC1 signaling pathway, which promotes growth and represses autophagy in nutrient-rich conditions. Also required for TORC1 inactivation during nitrogen starvation. Required for intracellular sorting of GAP1 out of the endosome. Involved in the regulation of microautophagy. The sequence is that of GTP-binding protein GTR2 from Saccharomyces cerevisiae (strain ATCC 204508 / S288c) (Baker's yeast).